The chain runs to 466 residues: 3-isopropylmalate dehydratase large subunit (466 aa).

Residues Cys-347, Cys-407, and Cys-410 each coordinate [4Fe-4S] cluster.

It belongs to the aconitase/IPM isomerase family. LeuC type 1 subfamily. In terms of assembly, heterodimer of LeuC and LeuD. The cofactor is [4Fe-4S] cluster.

It catalyses the reaction (2R,3S)-3-isopropylmalate = (2S)-2-isopropylmalate. Its pathway is amino-acid biosynthesis; L-leucine biosynthesis; L-leucine from 3-methyl-2-oxobutanoate: step 2/4. Functionally, catalyzes the isomerization between 2-isopropylmalate and 3-isopropylmalate, via the formation of 2-isopropylmaleate. The chain is 3-isopropylmalate dehydratase large subunit from Citrobacter koseri (strain ATCC BAA-895 / CDC 4225-83 / SGSC4696).